The sequence spans 143 residues: Transcriptional regulator MraZ (143 aa).

2 consecutive SpoVT-AbrB domains span residues 5–47 and 76–119; these read EYDH…TLDE and AVEV…DRET.

Belongs to the MraZ family. In terms of assembly, forms oligomers.

The protein localises to the cytoplasm. Its subcellular location is the nucleoid. The polypeptide is Transcriptional regulator MraZ (Staphylococcus aureus (strain Mu3 / ATCC 700698)).